A 1948-amino-acid polypeptide reads, in one-letter code: Chromodomain-helicase-DNA-binding protein 5 (1948 aa).

3 disordered regions span residues 1–136, 228–268, and 281–336; these read MRGP…SGQL, SPQQ…GRGK, and SKRK…GDGY. Composition is skewed to acidic residues over residues 17 to 37 and 71 to 89; these read EEME…EGFE and NDEL…ESEG. 2 stretches are compositionally biased toward basic residues: residues 95–114 and 250–268; these read TKKK…KRKK and GVRK…GRGK. The span at 289 to 299 shows a compositional bias: acidic residues; sequence SEEDEPEDSDL. Residues 319–328 are compositionally biased toward basic residues; sequence KKNKRRRKKK. 2 PHD-type zinc fingers span residues 341 to 388 and 414 to 461; these read QDYC…CEKE and MEFC…CTCP. The segment at 341–651 is histone-binding; it reads QDYCEVCQQG…HRELMLGEDA (311 aa). The region spanning 495-552 is the Chromo 1 domain; that stretch reads MPPPRPLEGIPEREFFVKWAGLSYWHCSWVKELQLELYHTVMYRNYQRKNDMDEPPPF. Residues 547-569 are disordered; it reads DEPPPFDYGSGDEDGKSEKRKNK. The segment covering 559–569 has biased composition (basic and acidic residues); it reads EDGKSEKRKNK. The region spanning 590 to 651 is the Chromo 2 domain; sequence MMVHRILNHS…HRELMLGEDA (62 aa). Residues 710 to 894 enclose the Helicase ATP-binding domain; sequence RFSWAQGTDT…FHLLNFLTPE (185 aa). 723–730 contributes to the ATP binding site; the sequence is DEMGLGKT. Positions 845-848 match the DEAH box motif; the sequence is DEAH. The Helicase C-terminal domain occupies 1026–1191; it reads LLQKMLKKLR…MTKQELDDIL (166 aa). Disordered regions lie at residues 1206-1250, 1349-1409, 1521-1566, and 1595-1692; these read MMSQ…VEDS, YNDA…LPPL, KYST…LPDK, and TALD…EDKN. Composition is skewed to acidic residues over residues 1353-1364 and 1374-1383; these read SQEDQEWQDELS and SEDEDEDFEE. Residue Gln-1388 is modified to N5-methylglutamine. Positions 1547–1561 are enriched in pro residues; that stretch reads TPVPASPAQLPPAPL. The residue at position 1552 (Ser-1552) is a Phosphoserine. Composition is skewed to basic and acidic residues over residues 1598-1625, 1633-1650, and 1657-1672; these read DRVE…EVEK, PLKE…DKLE, and NDFR…KEPT.

It belongs to the SNF2/RAD54 helicase family. As to quaternary structure, component of the nucleosome remodeling and deacetylase (NuRD) repressor complex, composed of core proteins MTA1, MTA2, MTA3, RBBP4, RBBP7, HDAC1, HDAC2, MBD2, MBD3, and peripherally associated proteins CDK2AP1, CDK2AP2, GATAD2A, GATAD2B, CHD3, CHD4 and CHD5. The exact stoichiometry of the NuRD complex is unknown, and some subunits such as MBD2 and MBD3, GATAD2A and GATAD2B, and CHD3, CHD4 and CHD5 define mutually exclusive NuRD complexes. Interacts with HDAC2. Methylated at Gln-1388 by N6AMT1. In terms of tissue distribution, expressed in brain regions enriched in neurons and not in regions rich in glial cells (at protein level).

Its subcellular location is the nucleus. It is found in the chromosome. The catalysed reaction is ATP + H2O = ADP + phosphate + H(+). Its function is as follows. ATP-dependent chromatin-remodeling factor that binds DNA through histones and regulates gene transcription. May specifically recognize and bind trimethylated 'Lys-27' (H3K27me3) and non-methylated 'Lys-4' of histone H3. Acts as a component of the histone deacetylase NuRD complex which participates in the remodeling of chromatin. Plays a role in the development of the nervous system by activating the expression of genes promoting neuron terminal differentiation. In parallel, it may also positively regulate the trimethylation of histone H3 at 'Lys-27' thereby specifically repressing genes that promote the differentiation into non-neuronal cell lineages. Regulates the expression of genes involved in cell proliferation and differentiation. Downstream activated genes may include CDKN2A that positively regulates the p53/TP53 pathway, which in turn, prevents cell proliferation. In spermatogenesis, it probably regulates histone hyperacetylation and the replacement of histones by transition proteins in chromatin, a crucial step in the condensation of spermatid chromatin and the production of functional spermatozoa. This is Chromodomain-helicase-DNA-binding protein 5 (Chd5) from Rattus norvegicus (Rat).